An 89-amino-acid chain; its full sequence is MPITKEEKQKVIQEFARFPGDTGSTEVQVALLTLRINRLSEHLKVHKKDHHSHRGLLMMVGQRRRLLRYLQREDPERYRALIEKLGIRG.

The protein belongs to the universal ribosomal protein uS15 family. In terms of assembly, part of the 30S ribosomal subunit. Forms a bridge to the 50S subunit in the 70S ribosome, contacting the 23S rRNA.

In terms of biological role, one of the primary rRNA binding proteins, it binds directly to 16S rRNA where it helps nucleate assembly of the platform of the 30S subunit by binding and bridging several RNA helices of the 16S rRNA. Forms an intersubunit bridge (bridge B4) with the 23S rRNA of the 50S subunit in the ribosome. This chain is Small ribosomal subunit protein uS15, found in Thermus thermophilus (strain ATCC BAA-163 / DSM 7039 / HB27).